Reading from the N-terminus, the 1721-residue chain is Ras guanine nucleotide exchange factor R (1721 aa).

Residues 148-279 (QLEDEVDLVH…LQQQQQQQRS (132 aa)) adopt a coiled-coil conformation. Disordered regions lie at residues 213 to 232 (QQQK…KEEK), 445 to 515 (SSLG…NQQP), 551 to 701 (ATTT…VDKQ), 716 to 766 (RTPL…KSPS), 797 to 837 (TITI…TPNK), and 929 to 981 (DEVS…DPVS). Residues 216 to 232 (KHQEEKEKNDQKEKEEK) are compositionally biased toward basic and acidic residues. 4 stretches are compositionally biased toward low complexity: residues 454–469 (SPEK…STSE), 479–493 (HNNN…STNN), 501–515 (PSLS…NQQP), and 551–581 (ATTT…LSIS). The segment covering 618–627 (NGTTSPRNNE) has biased composition (polar residues). Low complexity-rich tracts occupy residues 628-651 (SSVT…VNTI) and 663-686 (TPTT…SQND). Residues 687–701 (KQNENNNKENFVDKQ) show a composition bias toward basic and acidic residues. Composition is skewed to low complexity over residues 724–748 (SSNS…TNSS), 797–836 (TITI…TTPN), and 933–952 (ESSS…NTPS). A coiled-coil region spans residues 802–831 (NNNNNNNNNNNNNNNNNNNIQQQQQQQQQI). The span at 968-978 (NLSSINNSSYD) shows a compositional bias: polar residues. The N-terminal Ras-GEF domain maps to 1291–1411 (GRYVPKAGTL…ILGGLIKKKE (121 aa)). One can recognise a Ras-GEF domain in the interval 1447 to 1676 (NESEIARQLT…YQLSLIREPR (230 aa)).

Post-translationally, phosphorylated on threonine residues.

In terms of biological role, promotes the exchange of Ras-bound GDP by GTP. May also play a role in the activation of rasG. The polypeptide is Ras guanine nucleotide exchange factor R (gefR) (Dictyostelium discoideum (Social amoeba)).